Here is a 347-residue protein sequence, read N- to C-terminus: Indole-3-glycerol phosphate lyase, chloroplastic (347 aa).

2 disordered regions span residues 1–38 (MAFAPKTSSSSSLSSALQAAQSPPLLLRRMSSTATPRR) and 64–89 (APPQAPAPAPVPPKQAAAPAERRSRP). The N-terminal 53 residues, 1-53 (MAFAPKTSSSSSLSSALQAAQSPPLLLRRMSSTATPRRRYDAAVVVTTTTTAR), are a transit peptide targeting the chloroplast. The segment covering 8-27 (SSSSSLSSALQAAQSPPLLL) has biased composition (low complexity). Residues 64–76 (APPQAPAPAPVPP) are compositionally biased toward pro residues.

Belongs to the TrpA family. In terms of assembly, tetramer of two alpha and two beta chains for the tryptophan synthase activity. Homodimer of alpha chains for the indole-3-glycerol phosphate lyase activity.

The protein resides in the plastid. It localises to the chloroplast. The catalysed reaction is (1S,2R)-1-C-(indol-3-yl)glycerol 3-phosphate = indole + D-glyceraldehyde 3-phosphate. The enzyme catalyses (1S,2R)-1-C-(indol-3-yl)glycerol 3-phosphate + L-serine = D-glyceraldehyde 3-phosphate + L-tryptophan + H2O. Its pathway is secondary metabolite biosynthesis; 2,4-dihydroxy-1,4-benzoxazin-3-one biosynthesis; 2,4-dihydroxy-1,4-benzoxazin-3-one from indoleglycerol phosphate: step 1/5. It participates in amino-acid biosynthesis; L-tryptophan biosynthesis; L-tryptophan from chorismate: step 5/5. The alpha subunit is responsible for the aldol cleavage of indoleglycerol phosphate to indole and glyceraldehyde 3-phosphate. In bacteria, tryptophan synthase alpha (TSA) activity is almost completely dependent on formation of an active alpha2beta2 complex with tryptophan synthase beta (TSB), and indole is usually not released during tryptophan synthesis. In maize, the TSA homolog BX1 catalyzes the formation of free indole from indole-3-glycerol phosphate, independently of TSB. This Zea mays (Maize) protein is Indole-3-glycerol phosphate lyase, chloroplastic (BX1).